Consider the following 133-residue polypeptide: Exosome complex protein C1739.07 (133 aa).

The tract at residues 96–133 (VNPKTEAVNTSNAAISSSSSNRPKVAKDAATRIIKHHT) is disordered. Residues 102 to 116 (AVNTSNAAISSSSSN) show a composition bias toward low complexity.

This sequence belongs to the C1D family. As to quaternary structure, component of the exosome multienzyme ribonuclease complex. Interacts with cut3.

The protein localises to the cytoplasm. It is found in the nucleus. Functionally, required for exosome-dependent processing of pre-rRNA and small nucleolar RNA (snRNA) precursors. Involved in processing of 35S pre-rRNA at the A0, A1 and A2 sites. This chain is Exosome complex protein C1739.07, found in Schizosaccharomyces pombe (strain 972 / ATCC 24843) (Fission yeast).